A 470-amino-acid polypeptide reads, in one-letter code: L-seryl-tRNA(Sec) selenium transferase (470 aa).

Lysine 294 is modified (N6-(pyridoxal phosphate)lysine).

The protein belongs to the SelA family. The cofactor is pyridoxal 5'-phosphate.

The protein localises to the cytoplasm. It catalyses the reaction L-seryl-tRNA(Sec) + selenophosphate + H(+) = L-selenocysteinyl-tRNA(Sec) + phosphate. Its pathway is aminoacyl-tRNA biosynthesis; selenocysteinyl-tRNA(Sec) biosynthesis; selenocysteinyl-tRNA(Sec) from L-seryl-tRNA(Sec) (bacterial route): step 1/1. Its function is as follows. Converts seryl-tRNA(Sec) to selenocysteinyl-tRNA(Sec) required for selenoprotein biosynthesis. The chain is L-seryl-tRNA(Sec) selenium transferase from Solidesulfovibrio magneticus (strain ATCC 700980 / DSM 13731 / RS-1) (Desulfovibrio magneticus).